We begin with the raw amino-acid sequence, 187 residues long: NADH-quinone oxidoreductase subunit B (187 aa).

4 residues coordinate [4Fe-4S] cluster: Cys-66, Cys-67, Cys-131, and Cys-161.

Belongs to the complex I 20 kDa subunit family. NDH-1 is composed of 14 different subunits. Subunits NuoB, C, D, E, F, and G constitute the peripheral sector of the complex. It depends on [4Fe-4S] cluster as a cofactor.

Its subcellular location is the cell inner membrane. It carries out the reaction a quinone + NADH + 5 H(+)(in) = a quinol + NAD(+) + 4 H(+)(out). NDH-1 shuttles electrons from NADH, via FMN and iron-sulfur (Fe-S) centers, to quinones in the respiratory chain. Couples the redox reaction to proton translocation (for every two electrons transferred, four hydrogen ions are translocated across the cytoplasmic membrane), and thus conserves the redox energy in a proton gradient. In Rhizorhabdus wittichii (strain DSM 6014 / CCUG 31198 / JCM 15750 / NBRC 105917 / EY 4224 / RW1) (Sphingomonas wittichii), this protein is NADH-quinone oxidoreductase subunit B.